We begin with the raw amino-acid sequence, 585 residues long: Putative sulfur deprivation response regulator (585 aa).

A run of 5 helical transmembrane segments spans residues 5–25 (VVDADVCLFAASTLLLLRGII), 30–50 (AFAGLANDSIVSIALMMMIAA), 83–103 (VASVSAVMNNTPLVAVMIPVV), 117–137 (FMMPLSYSAILGGLCTIIGTS), and 162–182 (IIGLPLTVAGGIYVVLFSPLL). 2 RCK C-terminal domains span residues 189–274 (MMAA…LPGL) and 288–372 (ETVA…STEW). A run of 5 helical transmembrane segments spans residues 389–409 (LALFMSLGIFIALIVLNSMDV), 411–431 (PLSTTALVCLFAYLITGVLTV), 442–462 (ILLTVAGGFGVAKAMTVTGLA), 482–502 (VAAIYASTSLLTALLSNGAAV), and 561–581 (FGLPLQFVAALITVPICVLYF).

The protein belongs to the CitM (TC 2.A.11) transporter family.

Its subcellular location is the membrane. Its function is as follows. Not known; mutations in SAC1 produces cells that cannot synthesize arylsulfatase and cannot take up sulfate as rapidly as wild-type cells. SAC1 is necessary for cells to survive sulfur deprivation. This Chlamydomonas reinhardtii (Chlamydomonas smithii) protein is Putative sulfur deprivation response regulator (SAC1).